Here is a 658-residue protein sequence, read N- to C-terminus: NUAK family SNF1-like kinase 1 (658 aa).

Met1 carries the N-acetylmethionine modification. Residues 1-53 (MEGAAVSAAGDGPAVETGLPGSPLEAVAGATAAPVEPRKPHGVKRHHHKHNLK) are disordered. Position 22 is a phosphoserine (Ser22). Over residues 40–53 (PHGVKRHHHKHNLK) the composition is skewed to basic residues. Residues 56–307 (YELQETLGKG…IEDIANHWWV (252 aa)) enclose the Protein kinase domain. ATP-binding positions include 62 to 70 (LGKGTYGKV) and Lys85. The active-site Proton acceptor is the Asp179. The residue at position 212 (Thr212) is a Phosphothreonine; by LKB1. 2 disordered regions span residues 353–422 (LAKP…EGIV) and 441–568 (IPLP…SYSR). A compositionally biased stretch (polar residues) spans 378 to 393 (FPQSGQDSVPESPSKL). Residues 394–405 (SSKRPKGILKKR) are compositionally biased toward basic residues. Residues 400 to 403 (GILK) carry the GILK motif motif. Ser456 is subject to Phosphoserine. Residues 519–530 (SCRRKGILKHSS) show a composition bias toward basic residues. The span at 559–568 (SDGISRSYSR) shows a compositional bias: low complexity. Ser601 is subject to Phosphoserine; by PKB/AKT1.

The protein belongs to the protein kinase superfamily. CAMK Ser/Thr protein kinase family. SNF1 subfamily. As to quaternary structure, interacts (via GILK motif) with PPP1CB; the interaction is direct and bridges NUAK1 and PPP1R12A. Interacts with CDKN1A. Requires Mg(2+) as cofactor. Post-translationally, phosphorylated at Thr-212 by STK11/LKB1 in complex with STE20-related adapter-alpha (STRADA) pseudo kinase and CAB39. Not dephosphorylated by the myosin PP1 complex when regulating its activity, due to the presence of PPP1R12A, which prevents myosin PP1 from dephosphorylating NUAK1. Phosphorylated by STK38L upon stimulation with IGF1. Ubiquitinated with 'Lys-29'- and 'Lys-33'-linked polyubiquitins which appear to impede LKB1-mediated phosphorylation. Deubiquitinated by USP9X. Expressed in the developing central nervous system, in epidermis, and some other tissues.

It is found in the nucleus. Its subcellular location is the cytoplasm. The enzyme catalyses L-seryl-[protein] + ATP = O-phospho-L-seryl-[protein] + ADP + H(+). It catalyses the reaction L-threonyl-[protein] + ATP = O-phospho-L-threonyl-[protein] + ADP + H(+). Activated by phosphorylation on Thr-212. Activated by phosphorylation at Ser-601 AKT1 during glucose starvation; the relevance of such activation in normal cells is however unsure. Its function is as follows. Serine/threonine-protein kinase involved in various processes such as cell adhesion, regulation of cell ploidy and senescence, cell proliferation and tumor progression. Phosphorylates ATM, CASP6, LATS1, PPP1R12A and p53/TP53. Acts as a regulator of cellular senescence and cellular ploidy by mediating phosphorylation of 'Ser-464' of LATS1, thereby controlling its stability. Controls cell adhesion by regulating activity of the myosin protein phosphatase 1 (PP1) complex. Acts by mediating phosphorylation of PPP1R12A subunit of myosin PP1: phosphorylated PPP1R12A then interacts with 14-3-3, leading to reduced dephosphorylation of myosin MLC2 by myosin PP1. May be involved in DNA damage response: phosphorylates p53/TP53 at 'Ser-15' and 'Ser-392' and is recruited to the CDKN1A/WAF1 promoter to participate in transcription activation by p53/TP53. May also act as a tumor malignancy-associated factor by promoting tumor invasion and metastasis under regulation and phosphorylation by AKT1. Suppresses Fas-induced apoptosis by mediating phosphorylation of CASP6, thereby suppressing the activation of the caspase and the subsequent cleavage of CFLAR. Regulates UV radiation-induced DNA damage response mediated by CDKN1A. In association with STK11, phosphorylates CDKN1A in response to UV radiation and contributes to its degradation which is necessary for optimal DNA repair. The sequence is that of NUAK family SNF1-like kinase 1 (Nuak1) from Mus musculus (Mouse).